A 235-amino-acid polypeptide reads, in one-letter code: MNWRSERIWIELITGSRKTSNLCWACILFLGSLGFLLVGTSSYLGRNLISLFPSQQILFFPQGIVMSFYGIAGLFISSYLWCTILWNVGSGYDRFDRKEGIVCIFRWGFPGRNRRIFFRFLMRDIRSIRMEVKEGIYPRRVLSIEIRSQGSIPLTRTDENFTPREIEQKAAELAYFLRVPIEVFRTKEWILSRHGVGNPRILFNTTDLSSEQLLIRSKHVSVRSYFRSLLFPVCG.

The next 2 helical transmembrane spans lie at 21 to 43 (NLCWACILFLGSLGFLLVGTSSY) and 63 to 85 (GIVMSFYGIAGLFISSYLWCTIL).

Belongs to the Ycf4 family.

Its subcellular location is the plastid. It localises to the chloroplast thylakoid membrane. Its function is as follows. Seems to be required for the assembly of the photosystem I complex. The protein is Photosystem I assembly protein Ycf4 of Amborella trichopoda.